A 230-amino-acid chain; its full sequence is Sugar fermentation stimulation protein homolog (230 aa).

It belongs to the SfsA family.

This Thermoanaerobacter pseudethanolicus (strain ATCC 33223 / 39E) (Clostridium thermohydrosulfuricum) protein is Sugar fermentation stimulation protein homolog.